Consider the following 370-residue polypeptide: MFFFEKYRPKKPSDFLFNTDVLRQLKYLASNEDVPHIIISGPSGSGKKTLVKFLLEFLYDEDVNILRKRKYNINGSSTKKEIEILQSNYHIIIEPTSTNHDKYILQEIIKQYAMHKSFDIFKTKRKFKTIVIHNIENLANNSQAALRRTMERYAKTCRFIMVCNNLSKIMDPLRSRCRTFCVPLPTIENINTVVDYIAFMENIKLNKNDTKFILDNCNNNLKTAIWFLNCKGLNCSPFIALDEAFDLVVESILECRTGKNIFKIHNDIRTNIYNILITNIKGSEIINILVDKLIRKIDDDVINMNIIQYASKAEYNLTHGRRDITDIEYFISGVMQELVLNRNKEPEKSEKTKSKTGKLSRTNSKKTIKN.

Residue 41–48 coordinates ATP; it reads GPSGSGKK. The segment covering 342–353 has biased composition (basic and acidic residues); sequence RNKEPEKSEKTK. The tract at residues 342–370 is disordered; sequence RNKEPEKSEKTKSKTGKLSRTNSKKTIKN. Over residues 354 to 370 the composition is skewed to basic residues; the sequence is SKTGKLSRTNSKKTIKN.

It belongs to the activator 1 small subunits family. RfcS subfamily.

In terms of biological role, part of the RFC clamp loader complex which loads the PCNA sliding clamp onto DNA. The sequence is that of Putative replication factor C small subunit L478 from Acanthamoeba polyphaga (Amoeba).